A 128-amino-acid chain; its full sequence is Glycine cleavage system H protein (128 aa).

The 83-residue stretch at 22-104 (TVLVGITDYA…YGEGWIFRLK (83 aa)) folds into the Lipoyl-binding domain. Lysine 63 carries the post-translational modification N6-lipoyllysine.

The protein belongs to the GcvH family. The glycine cleavage system is composed of four proteins: P, T, L and H. It depends on (R)-lipoate as a cofactor.

Functionally, the glycine cleavage system catalyzes the degradation of glycine. The H protein shuttles the methylamine group of glycine from the P protein to the T protein. In Thermus thermophilus (strain ATCC BAA-163 / DSM 7039 / HB27), this protein is Glycine cleavage system H protein.